A 185-amino-acid chain; its full sequence is Probable nicotinate-nucleotide adenylyltransferase (185 aa).

Belongs to the NadD family.

It carries out the reaction nicotinate beta-D-ribonucleotide + ATP + H(+) = deamido-NAD(+) + diphosphate. Its pathway is cofactor biosynthesis; NAD(+) biosynthesis; deamido-NAD(+) from nicotinate D-ribonucleotide: step 1/1. Catalyzes the reversible adenylation of nicotinate mononucleotide (NaMN) to nicotinic acid adenine dinucleotide (NaAD). The chain is Probable nicotinate-nucleotide adenylyltransferase from Cereibacter sphaeroides (strain ATCC 17025 / ATH 2.4.3) (Rhodobacter sphaeroides).